The sequence spans 450 residues: Phosphoglucosamine mutase (450 aa).

Ser102 serves as the catalytic Phosphoserine intermediate. Residues Ser102, Asp243, Asp245, and Asp247 each coordinate Mg(2+). Phosphoserine is present on Ser102.

It belongs to the phosphohexose mutase family. Requires Mg(2+) as cofactor. In terms of processing, activated by phosphorylation.

It carries out the reaction alpha-D-glucosamine 1-phosphate = D-glucosamine 6-phosphate. In terms of biological role, catalyzes the conversion of glucosamine-6-phosphate to glucosamine-1-phosphate. In Rhizobium etli (strain ATCC 51251 / DSM 11541 / JCM 21823 / NBRC 15573 / CFN 42), this protein is Phosphoglucosamine mutase.